A 498-amino-acid chain; its full sequence is Pyridine nucleotide-disulfide oxidoreductase domain-containing protein 1 (498 aa).

An N-acetylmethionine modification is found at methionine 1.

The protein belongs to the class-I pyridine nucleotide-disulfide oxidoreductase family. PYROXD1 subfamily. Requires FAD as cofactor.

The protein localises to the nucleus. The protein resides in the cytoplasm. Its subcellular location is the myofibril. It localises to the sarcomere. In terms of biological role, probable FAD-dependent oxidoreductase; involved in the cellular oxidative stress response. Required for normal sarcomere structure and muscle fiber integrity. This is Pyridine nucleotide-disulfide oxidoreductase domain-containing protein 1 (Pyroxd1) from Mus musculus (Mouse).